The primary structure comprises 191 residues: Stress response regulator protein 1 (191 aa).

The Response regulatory domain occupies 62 to 181 (SFLLVDDNEI…TNYILQKIEQ (120 aa)). The residue at position 114 (aspartate 114) is a 4-aspartylphosphate.

In terms of biological role, required for stress adaptation, morphogenesis and virulence. This chain is Stress response regulator protein 1 (SRR1), found in Clavispora lusitaniae (strain ATCC 42720) (Yeast).